The primary structure comprises 139 residues: MIIGIGSDLIDIRRVAEVIERHGDRFLNRIFTEAERAKAERRAKNEKMVVATYAKRFAAKEACSKALGTGIRHGVWWRDMGVVNLPGGRPTMQLTGGAAERLKALTPAGHDARIDLSITDDWPLAQAFVIISAVSLATS.

2 residues coordinate Mg(2+): Asp-8 and Glu-61.

Belongs to the P-Pant transferase superfamily. AcpS family. It depends on Mg(2+) as a cofactor.

It localises to the cytoplasm. It catalyses the reaction apo-[ACP] + CoA = holo-[ACP] + adenosine 3',5'-bisphosphate + H(+). Functionally, transfers the 4'-phosphopantetheine moiety from coenzyme A to a Ser of acyl-carrier-protein. The chain is Holo-[acyl-carrier-protein] synthase from Bradyrhizobium sp. (strain BTAi1 / ATCC BAA-1182).